Here is an 807-residue protein sequence, read N- to C-terminus: Histone transcription regulator slm9 (807 aa).

WD repeat units follow at residues 62-100 and 102-140; these read SFDS…KAFQ and LSGP…ETIV. Residues 144 to 164 are disordered; that stretch reads EHADSNHQPAVSIEESKEAVE. 4 WD repeats span residues 182–221, 230–273, 276–322, and 326–367; these read GHHT…VEKS, PTGN…YDIN, GHQG…PMAV, and LSCS…EKMD. Positions 388–437 are disordered; the sequence is NKNAAADRTTSPTQGQPESPSKSILLRPPPSIASSPESKRRKCPKKFVAR. Residues 395–409 show a composition bias toward polar residues; the sequence is RTTSPTQGQPESPSK. Phosphoserine occurs at positions 406, 421, and 422. A compositionally biased stretch (basic residues) spans 426–435; sequence KRRKCPKKFV. WD repeat units lie at residues 492-526 and 528-574; these read DCSW…YIYS and AGRL…AIHS.

The protein belongs to the WD repeat HIR1 family. In terms of assembly, interacts with hip1 and hip3.

The protein resides in the cytoplasm. It is found in the nucleus. Functionally, probably required for replication-independent chromatin assembly. Required for transcriptional silencing in the outer repeat (otr) centromeric repeats and the Tf2 long terminal repeat retrotransposons. May play an indirect role in the regulation of cdc2 and/or wee1 at the G2/M stage of mitosis. The protein is Histone transcription regulator slm9 (slm9) of Schizosaccharomyces pombe (strain 972 / ATCC 24843) (Fission yeast).